The sequence spans 359 residues: Glycerol-3-phosphate dehydrogenase [NAD(P)+] (359 aa).

Positions 11, 12, 32, and 107 each coordinate NADPH. 2 residues coordinate sn-glycerol 3-phosphate: Lys107 and Gly138. Ala142 contributes to the NADPH binding site. Residues Lys193, Asp246, Ser256, Arg257, and Asn258 each coordinate sn-glycerol 3-phosphate. Lys193 acts as the Proton acceptor in catalysis. Position 257 (Arg257) interacts with NADPH. 2 residues coordinate NADPH: Val281 and Glu283.

This sequence belongs to the NAD-dependent glycerol-3-phosphate dehydrogenase family.

It localises to the cytoplasm. The catalysed reaction is sn-glycerol 3-phosphate + NAD(+) = dihydroxyacetone phosphate + NADH + H(+). It carries out the reaction sn-glycerol 3-phosphate + NADP(+) = dihydroxyacetone phosphate + NADPH + H(+). Its pathway is membrane lipid metabolism; glycerophospholipid metabolism. Its function is as follows. Catalyzes the reduction of the glycolytic intermediate dihydroxyacetone phosphate (DHAP) to sn-glycerol 3-phosphate (G3P), the key precursor for phospholipid synthesis. The protein is Glycerol-3-phosphate dehydrogenase [NAD(P)+] of Dehalococcoides mccartyi (strain ATCC BAA-2100 / JCM 16839 / KCTC 5957 / BAV1).